Reading from the N-terminus, the 479-residue chain is Adenosylhomocysteinase (479 aa).

Threonine 65, aspartate 145, and glutamate 205 together coordinate substrate. 206-208 (TTT) is a binding site for NAD(+). The substrate site is built by lysine 235 and aspartate 239. NAD(+)-binding positions include asparagine 240, 269–274 (GYGDVG), glutamate 292, asparagine 327, 348–350 (IGH), and asparagine 393.

It belongs to the adenosylhomocysteinase family. It depends on NAD(+) as a cofactor.

It is found in the cytoplasm. It catalyses the reaction S-adenosyl-L-homocysteine + H2O = L-homocysteine + adenosine. It functions in the pathway amino-acid biosynthesis; L-homocysteine biosynthesis; L-homocysteine from S-adenosyl-L-homocysteine: step 1/1. In terms of biological role, may play a key role in the regulation of the intracellular concentration of adenosylhomocysteine. The chain is Adenosylhomocysteinase from Herminiimonas arsenicoxydans.